We begin with the raw amino-acid sequence, 327 residues long: rRNA 2'-O-methyltransferase fibrillarin (327 aa).

A disordered region spans residues 1 to 96 (MGTDYRNSGR…GFKGGAKTMV (96 aa)). 8 positions are modified to asymmetric dimethylarginine: arginine 10, arginine 19, arginine 44, arginine 49, arginine 55, arginine 65, arginine 69, and arginine 78. Residues 22-56 (GNDRRDSGRSFGDRRPERPDFKRGDGGRGFGDRRG) show a composition bias toward basic and acidic residues. The segment covering 73–90 (DGPGGRGGPGGPGGGFKG) has biased composition (gly residues). Residues 181 to 182 (TT), 200 to 201 (EF), 225 to 226 (DA), and 245 to 248 (DVAQ) each bind S-adenosyl-L-methionine.

The protein belongs to the methyltransferase superfamily. Fibrillarin family. Component of box C/D small nucleolar ribonucleoprotein (snoRNP) particles. It is associated with the U3, U8 and U13 small nuclear RNAs. Post-translationally, by homology to other fibrillarins, some or all of the N-terminal domain arginines are modified to asymmetric dimethylarginine (DMA).

The protein localises to the nucleus. It localises to the nucleolus. The catalysed reaction is L-glutaminyl-[histone H2A] + S-adenosyl-L-methionine = N(5)-methyl-L-glutaminyl-[histone H2A] + S-adenosyl-L-homocysteine + H(+). In terms of biological role, S-adenosyl-L-methionine-dependent methyltransferase that has the ability to methylate both RNAs and proteins. Involved in pre-rRNA processing. Utilizes the methyl donor S-adenosyl-L-methionine to catalyze the site-specific 2'-hydroxyl methylation of ribose moieties in pre-ribosomal RNA. Site specificity is provided by a guide RNA that base pairs with the substrate. Methylation occurs at a characteristic distance from the sequence involved in base pairing with the guide RNA. Also acts as a protein methyltransferase by mediating methylation of 'Gln-105' of histone H2A (H2AQ105me), a modification that impairs binding of the FACT complex and is specifically present at 35S ribosomal DNA locus. In Giardia intestinalis (Giardia lamblia), this protein is rRNA 2'-O-methyltransferase fibrillarin.